A 321-amino-acid polypeptide reads, in one-letter code: Cytochrome f (321 aa).

The first 38 residues, 1 to 38, serve as a signal peptide directing secretion; the sequence is MKKNFYTISKTMSRSLKLILFSVFIGFSIFLIPQPTWA. Heme-binding residues include tyrosine 39, cysteine 59, cysteine 62, and histidine 63. A helical membrane pass occupies residues 288-308; the sequence is VIGMIIFFIGVGLSQIMLVLK.

Belongs to the cytochrome f family. The 4 large subunits of the cytochrome b6-f complex are cytochrome b6, subunit IV (17 kDa polypeptide, PetD), cytochrome f and the Rieske protein, while the 4 small subunits are PetG, PetL, PetM and PetN. The complex functions as a dimer. It depends on heme as a cofactor.

The protein localises to the cellular thylakoid membrane. In terms of biological role, component of the cytochrome b6-f complex, which mediates electron transfer between photosystem II (PSII) and photosystem I (PSI), cyclic electron flow around PSI, and state transitions. This chain is Cytochrome f, found in Prochlorococcus marinus (strain NATL1A).